Here is a 310-residue protein sequence, read N- to C-terminus: tRNA dimethylallyltransferase 2 (310 aa).

15-22 lines the ATP pocket; it reads GPTASGKT. 17 to 22 serves as a coordination point for substrate; sequence TASGKT. An interaction with substrate tRNA region spans residues 40–43; the sequence is DSMQ.

It belongs to the IPP transferase family. As to quaternary structure, monomer. Mg(2+) is required as a cofactor.

The enzyme catalyses adenosine(37) in tRNA + dimethylallyl diphosphate = N(6)-dimethylallyladenosine(37) in tRNA + diphosphate. Functionally, catalyzes the transfer of a dimethylallyl group onto the adenine at position 37 in tRNAs that read codons beginning with uridine, leading to the formation of N6-(dimethylallyl)adenosine (i(6)A). This chain is tRNA dimethylallyltransferase 2, found in Geotalea uraniireducens (strain Rf4) (Geobacter uraniireducens).